The sequence spans 343 residues: Uroporphyrinogen decarboxylase (343 aa).

Substrate-binding positions include 21-25, Asp-71, Tyr-148, Ser-203, and His-316; that span reads RQAGR.

It belongs to the uroporphyrinogen decarboxylase family. Homodimer.

Its subcellular location is the cytoplasm. It carries out the reaction uroporphyrinogen III + 4 H(+) = coproporphyrinogen III + 4 CO2. It participates in porphyrin-containing compound metabolism; protoporphyrin-IX biosynthesis; coproporphyrinogen-III from 5-aminolevulinate: step 4/4. Catalyzes the decarboxylation of four acetate groups of uroporphyrinogen-III to yield coproporphyrinogen-III. The polypeptide is Uroporphyrinogen decarboxylase (Campylobacter fetus subsp. fetus (strain 82-40)).